Reading from the N-terminus, the 269-residue chain is Undecaprenyl-diphosphatase (269 aa).

A run of 8 helical transmembrane segments spans residues 4–24 (IELW…WLPI), 50–70 (LWLH…PYWL), 86–106 (LFAI…YKVL), 113–133 (ATGD…GLLL), 146–166 (VNVV…IPGI), 186–206 (AVWL…ALEL), 220–240 (WMVT…EVLL), and 246–266 (LDFS…PLAA).

This sequence belongs to the UppP family.

The protein localises to the cell membrane. The catalysed reaction is di-trans,octa-cis-undecaprenyl diphosphate + H2O = di-trans,octa-cis-undecaprenyl phosphate + phosphate + H(+). Functionally, catalyzes the dephosphorylation of undecaprenyl diphosphate (UPP). The sequence is that of Undecaprenyl-diphosphatase from Methanopyrus kandleri (strain AV19 / DSM 6324 / JCM 9639 / NBRC 100938).